The chain runs to 293 residues: Pyridoxal 5'-phosphate synthase subunit PdxS (293 aa).

A D-ribose 5-phosphate-binding site is contributed by D23. The Schiff-base intermediate with D-ribose 5-phosphate role is filled by K80. A D-ribose 5-phosphate-binding site is contributed by G152. R164 lines the D-glyceraldehyde 3-phosphate pocket. Residues G213 and 234–235 contribute to the D-ribose 5-phosphate site; that span reads GS.

It belongs to the PdxS/SNZ family. In terms of assembly, in the presence of PdxT, forms a dodecamer of heterodimers.

It carries out the reaction aldehydo-D-ribose 5-phosphate + D-glyceraldehyde 3-phosphate + L-glutamine = pyridoxal 5'-phosphate + L-glutamate + phosphate + 3 H2O + H(+). Its pathway is cofactor biosynthesis; pyridoxal 5'-phosphate biosynthesis. Catalyzes the formation of pyridoxal 5'-phosphate from ribose 5-phosphate (RBP), glyceraldehyde 3-phosphate (G3P) and ammonia. The ammonia is provided by the PdxT subunit. Can also use ribulose 5-phosphate and dihydroxyacetone phosphate as substrates, resulting from enzyme-catalyzed isomerization of RBP and G3P, respectively. This Dehalococcoides mccartyi (strain ATCC BAA-2100 / JCM 16839 / KCTC 5957 / BAV1) protein is Pyridoxal 5'-phosphate synthase subunit PdxS.